The following is a 115-amino-acid chain: Large ribosomal subunit protein uL22 (115 aa).

It belongs to the universal ribosomal protein uL22 family. In terms of assembly, part of the 50S ribosomal subunit.

Functionally, this protein binds specifically to 23S rRNA; its binding is stimulated by other ribosomal proteins, e.g. L4, L17, and L20. It is important during the early stages of 50S assembly. It makes multiple contacts with different domains of the 23S rRNA in the assembled 50S subunit and ribosome. The globular domain of the protein is located near the polypeptide exit tunnel on the outside of the subunit, while an extended beta-hairpin is found that lines the wall of the exit tunnel in the center of the 70S ribosome. This chain is Large ribosomal subunit protein uL22, found in Streptomyces griseus subsp. griseus (strain JCM 4626 / CBS 651.72 / NBRC 13350 / KCC S-0626 / ISP 5235).